Consider the following 218-residue polypeptide: Oxygen regulatory protein NreC (218 aa).

The region spanning 2-119 is the Response regulatory domain; the sequence is KIVIADDHAV…QLILAVRTVY (118 aa). The residue at position 53 (aspartate 53) is a 4-aspartylphosphate. Residues 149–214 enclose the HTH luxR-type domain; sequence SSDPFKILSK…ELVEYALKKK (66 aa). A DNA-binding region (H-T-H motif) is located at residues 173–192; sequence NKDIAEKLFVSVKTVEAHKT.

Post-translationally, phosphorylated by NreB.

The protein localises to the cytoplasm. Member of the two-component regulatory system NreB/NreC involved in the control of dissimilatory nitrate/nitrite reduction in response to oxygen. Phosphorylated NreC binds to a GC-rich palindromic sequence at the promoters of the nitrate (narGHJI) and nitrite (nir) reductase operons, as well as the putative nitrate transporter gene narT, and activates their expression. The sequence is that of Oxygen regulatory protein NreC (nreC) from Staphylococcus epidermidis (strain ATCC 35984 / DSM 28319 / BCRC 17069 / CCUG 31568 / BM 3577 / RP62A).